A 314-amino-acid chain; its full sequence is Serine protease 46 (314 aa).

A Peptidase S1 domain is found at 44-281; it reads VVNGKVVEVG…FTQWIKRQIG (238 aa). Residues cysteine 69 and cysteine 85 are joined by a disulfide bond. Active-site charge relay system residues include histidine 84 and aspartate 130. Cystine bridges form between cysteine 164-cysteine 239, cysteine 197-cysteine 219, and cysteine 229-cysteine 257. Serine 233 (charge relay system) is an active-site residue. Residues 293–313 traverse the membrane as a helical segment; that stretch reads FLSPFILTGYILLVSLGSLWL.

Belongs to the peptidase S1 family.

The protein resides in the membrane. The sequence is that of Serine protease 46 (Prss46) from Rattus norvegicus (Rat).